The primary structure comprises 1044 residues: Spindle assembly checkpoint serine/threonine-protein kinase bub1 (1044 aa).

In terms of domain architecture, BUB1 N-terminal spans 36–204 (FQEELDIIEE…SSPFPPPRIV (169 aa)). 5 disordered regions span residues 209-259 (PVSS…PLLY), 317-343 (VHHD…TPTR), 404-446 (ESLE…SQEE), 484-555 (KNSN…DSNS), and 685-705 (IKPK…SLDG). The span at 223–239 (QVFSDASSSRDSQNASD) shows a compositional bias: polar residues. Residues 430 to 442 (NSSNSGATSLTGR) show a composition bias toward polar residues. A compositionally biased stretch (low complexity) spans 504–518 (STLQEETATGTTSTT). Residues 544 to 555 (RSPQYSTVDSNS) are compositionally biased toward polar residues. Thr550 carries the phosphothreonine modification. In terms of domain architecture, Protein kinase spans 718–1044 (LSVISKLGQG…LLKSIEKRKI (327 aa)). ATP contacts are provided by Ala728, Phe729, Ala730, Lys762, and Asp809. The active-site Proton acceptor is the Asp861. ATP contacts are provided by Asp865, Asn866, and Asp900.

This sequence belongs to the protein kinase superfamily. Ser/Thr protein kinase family. BUB1 subfamily. In terms of assembly, part of the BUB1-BUB3 complex, composed of bub1 and bub3. Interacts with spc7 (when phosphorylated on MELT motifs); to recruit the bub1-bub3 complex to kinetochores. Interacts with mad3. In terms of processing, autophosphorylated.

It is found in the nucleus. The protein resides in the chromosome. Its subcellular location is the centromere. It localises to the kinetochore. It catalyses the reaction L-seryl-[protein] + ATP = O-phospho-L-seryl-[protein] + ADP + H(+). It carries out the reaction L-threonyl-[protein] + ATP = O-phospho-L-threonyl-[protein] + ADP + H(+). Functionally, involved in mitotic spindle assembly checkpoint signaling, a process that delays anaphase until chromosomes are bioriented on the spindle, and in the repair of incorrect mitotic kinetochore-spindle microtubule attachments. Acts as a kinetochore scaffold for the recruitment of other spindle assembly checkpoint components. The polypeptide is Spindle assembly checkpoint serine/threonine-protein kinase bub1 (Schizosaccharomyces pombe (strain 972 / ATCC 24843) (Fission yeast)).